Here is a 1358-residue protein sequence, read N- to C-terminus: Xanthine dehydrogenase/oxidase (1358 aa).

Positions 8 to 95 constitute a 2Fe-2S ferredoxin-type domain; that stretch reads DELVFFVNGK…HVAVTTVEGI (88 aa). 8 residues coordinate [2Fe-2S] cluster: Cys47, Cys52, Cys55, Cys77, Cys117, Cys120, Cys152, and Cys154. An FAD-binding PCMH-type domain is found at 255 to 440; that stretch reads FKGERVMWIQ…LSVEIPYSKE (186 aa). Residues 283–290, Phe363, 373–377, Asp386, Leu430, and Lys448 each bind FAD; these read LVVGNTEV and ALGGN. Gln796 and Phe827 together coordinate Mo-molybdopterin. Substrate-binding residues include Glu831 and Arg909. Arg941 lines the Mo-molybdopterin pocket. Substrate contacts are provided by Phe943 and Thr1039. Ala1108 is a Mo-molybdopterin binding site. Residue Glu1290 is the Proton acceptor of the active site.

It belongs to the xanthine dehydrogenase family. As to quaternary structure, homodimer. The cofactor is FAD. Requires Mo-molybdopterin as cofactor. [2Fe-2S] cluster serves as cofactor. Detected in liver (at protein level).

It localises to the peroxisome. It is found in the cytoplasm. The enzyme catalyses xanthine + NAD(+) + H2O = urate + NADH + H(+). The catalysed reaction is hypoxanthine + NAD(+) + H2O = xanthine + NADH + H(+). It catalyses the reaction xanthine + O2 + H2O = urate + H2O2. Functionally, key enzyme in purine degradation. Catalyzes the oxidation of hypoxanthine to xanthine. Catalyzes the oxidation of xanthine to uric acid. Contributes to the generation of reactive oxygen species. This is Xanthine dehydrogenase/oxidase (XDH) from Gallus gallus (Chicken).